The sequence spans 322 residues: Phosphatidylserine decarboxylase proenzyme (322 aa).

Residues aspartate 90, histidine 147, and serine 254 each act as charge relay system; for autoendoproteolytic cleavage activity in the active site. Serine 254 acts as the Schiff-base intermediate with substrate; via pyruvic acid; for decarboxylase activity in catalysis. Serine 254 carries the post-translational modification Pyruvic acid (Ser); by autocatalysis. Residues 294 to 322 (EVEPAPLPADEIKAEHDASPLVDNKKDDT) are disordered. Positions 303-322 (DEIKAEHDASPLVDNKKDDT) are enriched in basic and acidic residues.

This sequence belongs to the phosphatidylserine decarboxylase family. PSD-B subfamily. Prokaryotic type I sub-subfamily. Heterodimer of a large membrane-associated beta subunit and a small pyruvoyl-containing alpha subunit. Pyruvate serves as cofactor. Post-translationally, is synthesized initially as an inactive proenzyme. Formation of the active enzyme involves a self-maturation process in which the active site pyruvoyl group is generated from an internal serine residue via an autocatalytic post-translational modification. Two non-identical subunits are generated from the proenzyme in this reaction, and the pyruvate is formed at the N-terminus of the alpha chain, which is derived from the carboxyl end of the proenzyme. The autoendoproteolytic cleavage occurs by a canonical serine protease mechanism, in which the side chain hydroxyl group of the serine supplies its oxygen atom to form the C-terminus of the beta chain, while the remainder of the serine residue undergoes an oxidative deamination to produce ammonia and the pyruvoyl prosthetic group on the alpha chain. During this reaction, the Ser that is part of the protease active site of the proenzyme becomes the pyruvoyl prosthetic group, which constitutes an essential element of the active site of the mature decarboxylase.

It localises to the cell membrane. The catalysed reaction is a 1,2-diacyl-sn-glycero-3-phospho-L-serine + H(+) = a 1,2-diacyl-sn-glycero-3-phosphoethanolamine + CO2. It participates in phospholipid metabolism; phosphatidylethanolamine biosynthesis; phosphatidylethanolamine from CDP-diacylglycerol: step 2/2. Catalyzes the formation of phosphatidylethanolamine (PtdEtn) from phosphatidylserine (PtdSer). The chain is Phosphatidylserine decarboxylase proenzyme from Salmonella paratyphi C (strain RKS4594).